The sequence spans 278 residues: 4-diphosphocytidyl-2-C-methyl-D-erythritol kinase (278 aa).

Residue K9 is part of the active site. 93-103 (PLGGGLGGGSS) lines the ATP pocket. Residue D135 is part of the active site.

This sequence belongs to the GHMP kinase family. IspE subfamily.

It catalyses the reaction 4-CDP-2-C-methyl-D-erythritol + ATP = 4-CDP-2-C-methyl-D-erythritol 2-phosphate + ADP + H(+). Its pathway is isoprenoid biosynthesis; isopentenyl diphosphate biosynthesis via DXP pathway; isopentenyl diphosphate from 1-deoxy-D-xylulose 5-phosphate: step 3/6. Catalyzes the phosphorylation of the position 2 hydroxy group of 4-diphosphocytidyl-2C-methyl-D-erythritol. The sequence is that of 4-diphosphocytidyl-2-C-methyl-D-erythritol kinase from Nitrosomonas europaea (strain ATCC 19718 / CIP 103999 / KCTC 2705 / NBRC 14298).